A 978-amino-acid chain; its full sequence is Mast/stem cell growth factor receptor Kit (978 aa).

An N-terminal signal peptide occupies residues 1–25; that stretch reads MRGARGAWDFLFVLLLLLLVQTGSS. The Extracellular portion of the chain corresponds to 26-525; it reads QPSVSPGELS…QIHAHTLFTP (500 aa). Ig-like C2-type domains lie at 27 to 112, 121 to 205, 212 to 309, 318 to 411, and 414 to 508; these read PSVS…VFVR, DLPL…LKVR, PVVS…LEVV, PMMN…VNVN, and PEIL…FNFA. Cys58 and Cys97 form a disulfide bridge. N-linked (GlcNAc...) asparagine glycans are attached at residues Asn94, Asn130, and Asn145. Intrachain disulfides connect Cys136–Cys186, Cys151–Cys183, and Cys233–Cys291. N-linked (GlcNAc...) asparagine glycosylation is found at Asn284, Asn294, Asn301, Asn321, Asn353, Asn368, Asn401, Asn464, and Asn487. The cysteines at positions 429 and 492 are disulfide-linked. Residues 526–546 form a helical membrane-spanning segment; sequence LLIGFVIAAGLMCIFVMILTY. The Cytoplasmic portion of the chain corresponds to 547–978; it reads KYLQKPMYEV…TQPLLVHEDV (432 aa). 2 positions are modified to phosphotyrosine: Tyr548 and Tyr554. Tyr569 provides a ligand contact to Mg(2+). Tyr569 and Tyr571 each carry phosphotyrosine; by autocatalysis. Positions 569–571 are important for interaction with phosphotyrosine-binding proteins; sequence YVY. Positions 590–939 constitute a Protein kinase domain; that stretch reads LSFGKTLGAG…ISESTNHIYS (350 aa). ATP is bound by residues 597 to 604, Lys624, and 672 to 678; these read GAGAFGKV and EYCCYGD. Tyr704 and Tyr722 each carry phosphotyrosine; by autocatalysis. Residue Tyr731 is modified to Phosphotyrosine. Phosphoserine; by PKC/PRKCA is present on residues Ser743 and Ser748. The active-site Proton acceptor is Asp794. Arg798 lines the ATP pocket. Asn799 and Asp812 together coordinate Mg(2+). At Ser823 the chain carries Phosphoserine. Tyr825 is modified (phosphotyrosine; by autocatalysis). A Phosphoserine modification is found at Ser893. Tyr902 is modified (phosphotyrosine). Position 938 is a phosphotyrosine; by autocatalysis (Tyr938). Ser961 carries the phosphoserine modification.

The protein belongs to the protein kinase superfamily. Tyr protein kinase family. CSF-1/PDGF receptor subfamily. Monomer in the absence of bound KITLG/SCF. Homodimer in the presence of bound KITLG/SCF, forming a heterotetramer with two KITLG/SCF molecules. Interacts (via phosphorylated tyrosine residues) with the adapter proteins GRB2 and GRB7 (via SH2 domain), and SH2B2/APS. Interacts (via C-terminus) with MPDZ (via the tenth PDZ domain). Interacts (via phosphorylated tyrosine residues) with PIK3R1 and PIK3CD. Interacts (via phosphorylated tyrosine) with CRK (isoform Crk-II), FYN, SHC1 and MATK/CHK (via SH2 domain). Interacts with LYN and FES/FPS. Interacts (via phosphorylated tyrosine residues) with the protein phosphatases PTPN6/SHP-1 (via SH2 domain), PTPN11/SHP-2 (via SH2 domain) and PTPRU. Interacts with PLCG1. Interacts with DOK1 and TEC. Interacts with IL1RAP (independent of stimulation with KITLG/SCF). A mast cell-specific KITLG/SCF-induced interleukin-33 signaling complex contains IL1RL1, IL1RAP, KIT and MYD88. Ubiquitinated by SOCS6. KIT is rapidly ubiquitinated after autophosphorylation induced by KITLG/SCF binding, leading to internalization and degradation. Post-translationally, autophosphorylated on tyrosine residues. KITLG/SCF binding promotes autophosphorylation. Phosphorylated tyrosine residues are important for interaction with specific binding partners.

It is found in the cell membrane. It catalyses the reaction L-tyrosyl-[protein] + ATP = O-phospho-L-tyrosyl-[protein] + ADP + H(+). Its activity is regulated as follows. Present in an inactive conformation in the absence of bound ligand. KITLG/SCF binding leads to dimerization and activation by autophosphorylation on tyrosine residues. Activity is down-regulated by PRKCA-mediated phosphorylation on serine residues. Functionally, tyrosine-protein kinase that acts as a cell-surface receptor for the cytokine KITLG/SCF and plays an essential role in the regulation of cell survival and proliferation, hematopoiesis, stem cell maintenance, gametogenesis, mast cell development, migration and function, and in melanogenesis. In response to KITLG/SCF binding, KIT can activate several signaling pathways. Phosphorylates PIK3R1, PLCG1, SH2B2/APS and CBL. Activates the AKT1 signaling pathway by phosphorylation of PIK3R1, the regulatory subunit of phosphatidylinositol 3-kinase. Activated KIT also transmits signals via GRB2 and activation of RAS, RAF1 and the MAP kinases MAPK1/ERK2 and/or MAPK3/ERK1. Promotes activation of STAT family members STAT1, STAT3, STAT5A and STAT5B. Activation of PLCG1 leads to the production of the cellular signaling molecules diacylglycerol and inositol 1,4,5-trisphosphate. KIT signaling is modulated by protein phosphatases, and by rapid internalization and degradation of the receptor. Activated KIT promotes phosphorylation of the protein phosphatases PTPN6/SHP-1 and PTPRU, and of the transcription factors STAT1, STAT3, STAT5A and STAT5B. Promotes phosphorylation of PIK3R1, CBL, CRK (isoform Crk-II), LYN, MAPK1/ERK2 and/or MAPK3/ERK1, PLCG1, SRC and SHC1. The chain is Mast/stem cell growth factor receptor Kit (KIT) from Capra hircus (Goat).